An 817-amino-acid chain; its full sequence is Probable beta-glucosidase G (817 aa).

Residues 1-20 form the signal peptide; that stretch reads MASIAHLIFSGLLAATVANS. N40, N58, N229, and N276 each carry an N-linked (GlcNAc...) asparagine glycan. The active site involves D304. N-linked (GlcNAc...) asparagine glycans are attached at residues N343, N350, N402, N507, N563, N584, N623, N662, N679, and N715.

Belongs to the glycosyl hydrolase 3 family.

It localises to the secreted. It catalyses the reaction Hydrolysis of terminal, non-reducing beta-D-glucosyl residues with release of beta-D-glucose.. Its pathway is glycan metabolism; cellulose degradation. Functionally, beta-glucosidases are one of a number of cellulolytic enzymes involved in the degradation of cellulosic biomass. Catalyzes the last step releasing glucose from the inhibitory cellobiose. The protein is Probable beta-glucosidase G (bglG) of Neosartorya fischeri (strain ATCC 1020 / DSM 3700 / CBS 544.65 / FGSC A1164 / JCM 1740 / NRRL 181 / WB 181) (Aspergillus fischerianus).